The primary structure comprises 148 residues: Large ribosomal subunit protein uL13 (148 aa).

Composition is skewed to basic and acidic residues over residues 71-81 (GKKEKQKEYHE) and 89-99 (DHSHSPEEMRA). Disordered stretches follow at residues 71-99 (GKKE…EMRA) and 125-148 (KKLK…LDNA).

This sequence belongs to the universal ribosomal protein uL13 family. In terms of assembly, part of the 50S ribosomal subunit.

This protein is one of the early assembly proteins of the 50S ribosomal subunit, although it is not seen to bind rRNA by itself. It is important during the early stages of 50S assembly. This Salinibacter ruber (strain DSM 13855 / M31) protein is Large ribosomal subunit protein uL13.